A 649-amino-acid chain; its full sequence is Endoplasmic reticulum chaperone BiP (649 aa).

Positions 1–20 (MGLSTYVGTFLLCILTLSHC) are cleaved as a signal peptide. ATP-binding positions include 36-39 (GTTY), Lys96, 226-228 (GGT), 292-299 (EKAKRTLS), and 363-366 (GSTR). Positions 125-279 (KPYMKVQVGS…KKKEGKDITK (155 aa)) are nucleotide-binding (NBD). A substrate-binding (SBD) region spans residues 399 to 499 (VQAGVISGVE…PRGLPQIEVT (101 aa)). Residues 646–649 (KEEL) carry the Prevents secretion from ER motif.

Belongs to the heat shock protein 70 family.

Its subcellular location is the endoplasmic reticulum lumen. The enzyme catalyses ATP + H2O = ADP + phosphate + H(+). The chaperone activity is regulated by ATP-induced allosteric coupling of the nucleotide-binding (NBD) and substrate-binding (SBD) domains. In the ADP-bound and nucleotide-free (apo) states, the two domains have little interaction. In contrast, in the ATP-bound state the two domains are tightly coupled, which results in drastically accelerated kinetics in both binding and release of polypeptide substrates. J domain-containing co-chaperones stimulate the ATPase activity and are required for efficient substrate recognition. Endoplasmic reticulum chaperone that plays a key role in protein folding and quality control in the endoplasmic reticulum lumen. Involved in the correct folding of proteins and degradation of misfolded proteins. Acts as a key repressor of the unfolded protein response (UPR). In Echinococcus multilocularis (Fox tapeworm), this protein is Endoplasmic reticulum chaperone BiP.